Consider the following 150-residue polypeptide: MQTQKPTLELVACDAAYRENPTALFHQVCGARPATLLLESADIDSKDDLKSLLLVDSALRITAIGDTVTIQALSANGASLLPLLDAALPAGVENKQQPNGRHLRFPAVSPLLDEDVRLRSLSAPDAFRPLQELVNVPAQEREVMFLGGMF.

Residue S40 coordinates L-tryptophan. R119 lines the chorismate pocket.

This sequence belongs to the anthranilate synthase component I family. Heterotetramer consisting of two non-identical subunits: a beta subunit (TrpG) and a large alpha subunit (TrpE). The cofactor is Mg(2+).

It catalyses the reaction chorismate + L-glutamine = anthranilate + pyruvate + L-glutamate + H(+). Its pathway is amino-acid biosynthesis; L-tryptophan biosynthesis; L-tryptophan from chorismate: step 1/5. Feedback inhibited by tryptophan. Its function is as follows. Part of a heterotetrameric complex that catalyzes the two-step biosynthesis of anthranilate, an intermediate in the biosynthesis of L-tryptophan. In the first step, the glutamine-binding beta subunit (TrpG) of anthranilate synthase (AS) provides the glutamine amidotransferase activity which generates ammonia as a substrate that, along with chorismate, is used in the second step, catalyzed by the large alpha subunit of AS (TrpE) to produce anthranilate. In the absence of TrpG, TrpE can synthesize anthranilate directly from chorismate and high concentrations of ammonia. In Citrobacter freundii, this protein is Anthranilate synthase component 1 (trpE).